The primary structure comprises 470 residues: Putative multidrug resistance protein MdtD (470 aa).

The Periplasmic portion of the chain corresponds to 1 to 11; the sequence is MTELPDNTRWQ. The chain crosses the membrane as a helical span at residues 12–32; the sequence is LWIVAFGFFMQSLDTTIVNTA. Residues 33–48 are Cytoplasmic-facing; the sequence is LPSMAKSLGESPLHMH. Residues 49 to 69 traverse the membrane as a helical segment; sequence MVVVSYVLTVAVMLPASGWLA. Residues 70 to 76 are Periplasmic-facing; the sequence is DKIGVRN. Residues 77–97 form a helical membrane-spanning segment; it reads IFFAAIVLFTLGSLFCALSGT. At 98-101 the chain is on the cytoplasmic side; that stretch reads LNQL. A helical membrane pass occupies residues 102 to 124; the sequence is VLARVLQGVGGAMMVPVGRLTVM. Residues 125-137 lie on the Periplasmic side of the membrane; that stretch reads KIVPRTQYMAAMT. The chain crosses the membrane as a helical span at residues 138-158; the sequence is FVTLPGQIGPLLGPALGGVLV. Residues 159 to 164 are Cytoplasmic-facing; the sequence is EYASWH. A helical membrane pass occupies residues 165 to 185; that stretch reads WIFLINIPVGIVGAMATFMLM. At 186 to 196 the chain is on the periplasmic side; that stretch reads PNYTIETRRFD. A helical transmembrane segment spans residues 197-217; it reads LPGFLLLAIGMAVLTLALDGS. At 218-224 the chain is on the cytoplasmic side; it reads KSMGISP. A helical membrane pass occupies residues 225 to 245; the sequence is WTLAGLAAGGAAAILLYLFHA. The Periplasmic segment spans residues 246 to 262; sequence KKNSGALFSLRLFRTPT. The helical transmembrane segment at 263–283 threads the bilayer; the sequence is FSLGLLGSFAGRIGSGMLPFM. Residues 284 to 285 are Cytoplasmic-facing; the sequence is TP. The chain crosses the membrane as a helical span at residues 286 to 306; the sequence is VFLQIGLGFSPFHAGLMMIPM. The Periplasmic portion of the chain corresponds to 307 to 341; it reads VLGSMGMKRIVVQIVNRFGYRRVLVATTLGLALVS. A helical membrane pass occupies residues 342-362; that stretch reads LLFMSVALLGWYYLLPLVLLL. At 363 to 395 the chain is on the cytoplasmic side; the sequence is QGMVNSARFSSMNTLTLKDLPDTLASSGNSLLS. Residues 396-416 traverse the membrane as a helical segment; sequence MIMQLSMSIGVTIAGMLLGMF. Residues 417 to 430 are Periplasmic-facing; it reads GQQHIGIDSSATHH. The chain crosses the membrane as a helical span at residues 431–451; the sequence is VFMYTWLCMAVIIALPAIIFA. The Cytoplasmic segment spans residues 452–470; that stretch reads RVPNDTQQNMVISRRKRSL.

Belongs to the major facilitator superfamily. TCR/Tet family.

It is found in the cell inner membrane. The polypeptide is Putative multidrug resistance protein MdtD (Salmonella dublin (strain CT_02021853)).